The sequence spans 214 residues: Calcineurin B homologous protein 3 (214 aa).

The tract at residues methionine 1–phenylalanine 20 is disordered. A lipid anchor (N-myristoyl glycine) is attached at glycine 2. The segment covering alanine 7–glycine 16 has biased composition (basic and acidic residues). Residues serine 110 to glycine 145 form the EF-hand domain. Aspartate 123, aspartate 125, aspartate 127, arginine 129, and glutamate 134 together coordinate Ca(2+).

This sequence belongs to the calcineurin regulatory subunit family. CHP subfamily. Monomer. Homodimer; disulfide-linked. Interacts with SLC9A1/NHE1; the interaction enables an optimal Na(+)/H(+) exchange activity. Expressed in mature megakaryocytes and polymorphonuclear granulocytes (at protein level). Abundantly expressed in heart. Also expressed at a lower level in adult testis and salivary gland, and in the placenta.

The protein localises to the nucleus. It is found in the cytoplasm. It localises to the membrane. Its subcellular location is the cell membrane. The protein resides in the cell projection. The protein localises to the lamellipodium. It is found in the ruffle membrane. In terms of biological role, functions as an integral cofactor in cell pH regulation by controlling plasma membrane-type Na(+)/H(+) exchange activity. Promotes the maturation, transport, cell surface stability and exchange activity of SLC9A1/NHE1 at the plasma membrane. Promotes the induction of hematopoietic stem cell differentiation toward megakaryocytic lineage. Essential for the coupling of ERK cascade activation with the expression of ETS family genes in megakaryocytic differentiation. Also involved in granulocytic differentiation in a ERK-dependent manner. Inhibits the phosphatase activity of calcineurin. This chain is Calcineurin B homologous protein 3 (TESC), found in Homo sapiens (Human).